Reading from the N-terminus, the 470-residue chain is Cyclin-dependent kinase E-1 (470 aa).

The Protein kinase domain occupies 25-333 (YNLVGKIGEG…ASQALEHEYF (309 aa)). ATP-binding positions include 31-39 (IGEGTYGLV) and K55. Y36 is modified (phosphotyrosine). Catalysis depends on D154, which acts as the Proton acceptor. The segment at 428 to 470 (LNPSVPLQQQRGMAQPHQQQQLRRKDPGMGMSGYAPPNKSRRL) is disordered. Residues 432-448 (VPLQQQRGMAQPHQQQQ) show a composition bias toward polar residues.

The protein belongs to the protein kinase superfamily. CMGC Ser/Thr protein kinase family. CDC2/CDKX subfamily. In terms of assembly, interacts with MED14, HDA19 and LUG. Interacts with KIN10. In terms of tissue distribution, expressed in roots, leaves and stems. Expressed in young dividing tissue, such as shoot and root tips, lateral root primordia, young leaves and flowers. Expressed in the inflorescence meristem, inflorescence stem and young flowers.

The protein resides in the nucleus. It carries out the reaction L-seryl-[protein] + ATP = O-phospho-L-seryl-[protein] + ADP + H(+). The enzyme catalyses L-threonyl-[protein] + ATP = O-phospho-L-threonyl-[protein] + ADP + H(+). It catalyses the reaction [DNA-directed RNA polymerase] + ATP = phospho-[DNA-directed RNA polymerase] + ADP + H(+). Involved in cell differentiation. Required for the specification of stamen and carpel identities and for the proper termination of stem cells in the floral meristem. This Arabidopsis thaliana (Mouse-ear cress) protein is Cyclin-dependent kinase E-1 (CDKE-1).